Reading from the N-terminus, the 406-residue chain is Succinylornithine transaminase (406 aa).

K252 is modified (N6-(pyridoxal phosphate)lysine).

Belongs to the class-III pyridoxal-phosphate-dependent aminotransferase family. AstC subfamily. Requires pyridoxal 5'-phosphate as cofactor.

It catalyses the reaction N(2)-succinyl-L-ornithine + 2-oxoglutarate = N-succinyl-L-glutamate 5-semialdehyde + L-glutamate. It participates in amino-acid degradation; L-arginine degradation via AST pathway; L-glutamate and succinate from L-arginine: step 3/5. Catalyzes the transamination of N(2)-succinylornithine and alpha-ketoglutarate into N(2)-succinylglutamate semialdehyde and glutamate. Can also act as an acetylornithine aminotransferase. This is Succinylornithine transaminase from Citrobacter koseri (strain ATCC BAA-895 / CDC 4225-83 / SGSC4696).